The following is a 462-amino-acid chain: MVGFSGDTIAAIATAIVPQQGSVGIVRLSGAAATEIARQIFQIAGQQPWESHRILYGYIRDPESGRLVDEALLLPMLAPRSYTREDVVELHCHGGLMPVQQTLQLCIRAGARLAEPGEFTLRAFLNGRLDLSQAESIADLISAQSPQAAQAALGSLQGKLGHPIRQLRDRCLDILAEVEARIDFEDDLPPLDLEAIAAQLTAAGADMQAILSTADRGELLRTGLKIAIVGRPNVGKSSLLNAWSRCDRAIVTDLPGTTRDLVESQLIVGGIPVQVLDTAGIRETSDQVEQIGVERSRRAAQSADLVLLTIDASAGWSAEDQTIWEAVSDRPILLVINKRDRLSEAERHAIALPQQEFKAIVWTAAAQQQGIEDLEAAILAAVGTGDLTSANWDWALNQRQVAALTTAQTALRRVEETLQAQLPLDFWTIDLREAIAALGSITGEEIAESMLDLIFSRFCIGK.

Positions 27, 89, and 128 each coordinate (6S)-5-formyl-5,6,7,8-tetrahydrofolate. Residues 223-383 (GLKIAIVGRP…LEAAILAAVG (161 aa)) enclose the TrmE-type G domain. K(+) is bound at residue N233. Residues 233–238 (NVGKSS), 252–258 (TDLPGTT), and 277–280 (DTAG) contribute to the GTP site. S237 is a Mg(2+) binding site. Positions 252, 254, and 257 each coordinate K(+). Residue T258 participates in Mg(2+) binding. Residue K462 participates in (6S)-5-formyl-5,6,7,8-tetrahydrofolate binding.

Belongs to the TRAFAC class TrmE-Era-EngA-EngB-Septin-like GTPase superfamily. TrmE GTPase family. Homodimer. Heterotetramer of two MnmE and two MnmG subunits. Requires K(+) as cofactor.

Its subcellular location is the cytoplasm. Its function is as follows. Exhibits a very high intrinsic GTPase hydrolysis rate. Involved in the addition of a carboxymethylaminomethyl (cmnm) group at the wobble position (U34) of certain tRNAs, forming tRNA-cmnm(5)s(2)U34. The protein is tRNA modification GTPase MnmE of Synechococcus elongatus (strain ATCC 33912 / PCC 7942 / FACHB-805) (Anacystis nidulans R2).